A 708-amino-acid chain; its full sequence is Exocyst complex component 8 (708 aa).

Residues 168-268 form the PH domain; it reads YLVYNGDLLE…WLEVLEETKR (101 aa). The span at 271–282 shows a compositional bias: basic and acidic residues; it reads ALSEKRRLEQEA. Positions 271-314 are disordered; sequence ALSEKRRLEQEALPRPAPTPPESTNPFEEEEEEEEEPSAEEEAV. Positions 297-314 are enriched in acidic residues; the sequence is FEEEEEEEEEPSAEEEAV.

It belongs to the EXO84 family. The exocyst complex is composed of EXOC1, EXOC2, EXOC3, EXOC4, EXOC5, EXOC6, EXOC7 and EXOC8.

The protein localises to the cytoplasm. The protein resides in the perinuclear region. It is found in the cell projection. Its subcellular location is the growth cone. In terms of biological role, component of the exocyst complex involved in the docking of exocytic vesicles with fusion sites on the plasma membrane. The protein is Exocyst complex component 8 (EXOC8) of Gallus gallus (Chicken).